Reading from the N-terminus, the 282-residue chain is Shikimate kinase (282 aa).

Pro-86–Ala-96 is an ATP binding site.

This sequence belongs to the GHMP kinase family. Archaeal shikimate kinase subfamily.

Its subcellular location is the cytoplasm. It catalyses the reaction shikimate + ATP = 3-phosphoshikimate + ADP + H(+). It functions in the pathway metabolic intermediate biosynthesis; chorismate biosynthesis; chorismate from D-erythrose 4-phosphate and phosphoenolpyruvate: step 5/7. The sequence is that of Shikimate kinase (aroK) from Methanocaldococcus jannaschii (strain ATCC 43067 / DSM 2661 / JAL-1 / JCM 10045 / NBRC 100440) (Methanococcus jannaschii).